Reading from the N-terminus, the 466-residue chain is Prophage integrase IntF (466 aa).

One can recognise a Core-binding (CB) domain in the interval 134-239 (KTKVTFSVAW…LLRAFIKWSN (106 aa)). The region spanning 268–445 (KADDCLQKEQ…PLDLLRKWHE (178 aa)) is the Tyr recombinase domain. Residues R306, K328, H396, R399, and H422 contribute to the active site. Y432 functions as the O-(3'-phospho-DNA)-tyrosine intermediate in the catalytic mechanism.

This sequence belongs to the 'phage' integrase family.

Integrase is necessary for integration of the phage into the host genome by site-specific recombination. In conjunction with excisionase, integrase is also necessary for excision of the prophage from the host genome. In Escherichia coli (strain K12), this protein is Prophage integrase IntF (intF).